The primary structure comprises 279 residues: 2-dehydro-3-deoxyphosphooctonate aldolase (279 aa).

Belongs to the KdsA family.

The protein resides in the cytoplasm. The enzyme catalyses D-arabinose 5-phosphate + phosphoenolpyruvate + H2O = 3-deoxy-alpha-D-manno-2-octulosonate-8-phosphate + phosphate. It participates in carbohydrate biosynthesis; 3-deoxy-D-manno-octulosonate biosynthesis; 3-deoxy-D-manno-octulosonate from D-ribulose 5-phosphate: step 2/3. It functions in the pathway bacterial outer membrane biogenesis; lipopolysaccharide biosynthesis. The polypeptide is 2-dehydro-3-deoxyphosphooctonate aldolase (Bartonella henselae (strain ATCC 49882 / DSM 28221 / CCUG 30454 / Houston 1) (Rochalimaea henselae)).